We begin with the raw amino-acid sequence, 471 residues long: Coronin-6 (471 aa).

WD repeat units follow at residues 79–119, 129–169, 173–212, 216–259, and 264–304; these read GHTG…PVRN, GHSK…VLLS, IHPDVIHSVCWNSNGSLLATTCKDKTLRIIDPRKSQVVAE, PHEG…EPVA, and DTSN…PFVH. The tract at residues 410-433 is disordered; the sequence is ILDVRPPASPRRSQSASEAPLSQH. A compositionally biased stretch (low complexity) spans 419–429; sequence PRRSQSASEAP. Residues 426–468 are a coiled coil; the sequence is SEAPLSQHTLETLLEEIKALRDRVQAQEERITALENMLCELVD.

The chain is Coronin-6 (Coro6) from Mus musculus (Mouse).